A 138-amino-acid chain; its full sequence is Acidic phospholipase A2 inhibitor chain HPD-1I (138 aa).

A signal peptide spans 1-16; it reads MRTLWIVAVCLIGVEG. Cystine bridges form between Cys42-Cys131, Cys44-Cys60, Cys59-Cys111, Cys65-Cys138, Cys66-Cys104, Cys73-Cys97, and Cys91-Cys102.

Heterodimer of an acidic and a basic chain; non-covalently linked. The basic chain is toxic and has phospholipase A2 activity (chain HDP-1P (AC Q1RP79) or HDP-2P (AC Q1RP78)) and the acidic chain is non-toxic and functions as its inhibitor (chain HPD-1I). In terms of tissue distribution, expressed by the venom gland.

The protein resides in the secreted. Its function is as follows. Heterodimer: slightly affects neuromuscular transmission acting presynaptically. It has a low catalytic activity, a low anticoagulant activity and weakly inhibits ADP-induced platelet aggregation. Functionally, monomer: has no activity (neurotoxic, catalytic, anticoagulant and a ADP-induced platelet aggregation), but inhibits phospholipase A2. In Vipera nikolskii (Nikolsky's adder), this protein is Acidic phospholipase A2 inhibitor chain HPD-1I.